The sequence spans 79 residues: CDC42 small effector protein 1-A (79 aa).

S-palmitoyl cysteine attachment occurs at residues Cys10 and Cys11. Residues 30-43 (IGEPMNFVHLTHVG) form the CRIB domain.

It belongs to the CDC42SE/SPEC family.

The protein localises to the cytoplasm. It is found in the cytoskeleton. It localises to the cell membrane. Functionally, probably involved in the organization of the actin cytoskeleton by acting downstream of CDC42, inducing actin filament assembly. This Xenopus laevis (African clawed frog) protein is CDC42 small effector protein 1-A (cdc42se1-a).